Here is a 159-residue protein sequence, read N- to C-terminus: bZIP transcription factor 11 (159 aa).

Low complexity predominate over residues 1 to 21 (MESSSSGTTSSTIQTSSGSEE). A disordered region spans residues 1 to 47 (MESSSSGTTSSTIQTSSGSEESLMEQRKRKRMLSNRESARRSRMKKQ). In terms of domain architecture, bZIP spans 25 to 88 (EQRKRKRMLS…LTVEAENSVL (64 aa)). A basic motif region spans residues 27 to 48 (RKRKRMLSNRESARRSRMKKQK). A leucine-zipper region spans residues 53–67 (LTAQVNHLKKENTEI).

As to quaternary structure, forms heterodimers with BZIP1, BZIP9, BZIP10, BZIP25 and BZIP63. Interacts with ADA2B. As to expression, highly expressed in stems and flowers. Expressed in root tips, cotyledons, leaf vasculature, embryos, apical parts of siliques and funiculi.

It is found in the nucleus. In terms of biological role, transcription factor that binds to the DNA sequence 5'-ACTCAT-3' in target gene promoters. Promotes POX1/PRODH1 expression in response to hypoosmolarity stress. Positively regulates the expression of ASN1 and POX2/PRODH2 genes, which are involved in amino acid metabolism. Regulates several metabolic pathways such as myo-inositol, raffinose and trehalose. Regulates several trehalose metabolism genes, including TRE1, TPP5 and TPP6. Mediates recruitment of the histone acetylation machinery to activate auxin-induced transcription. Interacts with ADA2B adapter protein to promote ADA2B-mediated recruitment of SAGA-like histone acetyltransferase complexes to specific auxin-responsive genes. The sequence is that of bZIP transcription factor 11 from Arabidopsis thaliana (Mouse-ear cress).